The primary structure comprises 137 residues: Large ribosomal subunit protein uL16 (137 aa).

It belongs to the universal ribosomal protein uL16 family. Part of the 50S ribosomal subunit.

Binds 23S rRNA and is also seen to make contacts with the A and possibly P site tRNAs. In Rhizobium etli (strain CIAT 652), this protein is Large ribosomal subunit protein uL16.